A 126-amino-acid chain; its full sequence is Regulatory protein MgsR (126 aa).

An intrachain disulfide couples Cys-13 to Cys-16.

The protein belongs to the ArsC family.

The protein localises to the cytoplasm. Its activity is regulated as follows. Activity is controlled at multiple levels. Regulation includes a positive autoregulatory loop on mgsR transcription and a post-translational redox-sensitive activation step by an intramolecular disulfide bond formation in response to ethanol stress. In addition, protein stability is strictly controlled by rapid proteolytic degradation by the ClpXP and ClpCP proteases. The McsB protein-arginine kinase might serve as a proteolytic adapter for the ClpX ATPase in the degradation mechanism of MgsR. Functionally, regulates transcription of a subregulon within the general stress response. Exerts positive and negative effects in response to ethanol stress. The protein is Regulatory protein MgsR of Bacillus subtilis (strain 168).